We begin with the raw amino-acid sequence, 381 residues long: Neutral protease 2 homolog mep20 (381 aa).

The first 19 residues, 1–19 (MRFTALASAILPLACNVLA), serve as a signal peptide directing secretion. Residues 20–193 (LPAKTGEAPK…ASAVKPLDKR (174 aa)) constitute a propeptide that is removed on maturation. 2 cysteine pairs are disulfide-bonded: Cys199–Cys271 and Cys278–Cys296. Residue His321 coordinates Zn(2+). Residue Glu322 is part of the active site. Residues His325 and Asp336 each contribute to the Zn(2+) site.

It belongs to the peptidase M35 family. The cofactor is Zn(2+).

The catalysed reaction is Preferential cleavage of bonds with hydrophobic residues in P1'. Also 3-Asn-|-Gln-4 and 8-Gly-|-Ser-9 bonds in insulin B chain.. Its function is as follows. Secreted metalloproteinase that allows assimilation of proteinaceous substrates. Shows high activities on basic nuclear substrates such as histone and protamine. This chain is Neutral protease 2 homolog mep20 (mep20), found in Aspergillus flavus.